Consider the following 2726-residue polypeptide: Filamin-C (2726 aa).

Residues 1–260 (MMNNSNYSDA…VMTYLSQFPK (260 aa)) form an actin-binding region. At S5 the chain carries Phosphoserine. Calponin-homology (CH) domains follow at residues 37–143 (KIQQ…LHYS) and 160–263 (QTPK…KAKL). 15 Filamin repeats span residues 271–369 (SKQL…EVNV), 371–469 (MALG…PVHV), 470–566 (AEAC…EVQV), 567–659 (SPEA…IAHI), 663–759 (PPDC…RVNV), 760–862 (GEGS…HIKV), 863–961 (DPSH…VVNV), 962–1057 (APPL…AVEG), 1058–1150 (VLPP…KATI), 1151–1245 (QPVF…RVHV), 1246–1345 (QPAV…RVGV), 1346–1438 (TEGC…RVPV), 1439–1534 (KDVV…KIKV), 1535–1631 (LPAH…RIHA), and 1636–1735 (DASK…HVLA). An Omega-N-methylarginine modification is found at R1003. S1162 and S1339 each carry phosphoserine. The tract at residues 1736 to 1759 (CDPLPHVEEPAEVLQLHQPYAPLR) is hinge 1. Filamin repeat units follow at residues 1760–1854 (PGTC…LQFY), 1855–1947 (VDAI…TAKI), 1948–2034 (TGDD…KILV), and 2037–2129 (SEIG…TVKV). A Phosphoserine modification is found at S2043. The intradomain insert; mediate targeting to Z lines stretch occupies residues 2163 to 2244 (GNWFQMVSAQ…FGSITRQQEG (82 aa)). Positions 2194 to 2210 (ISKTRGGETKREVRVEE) are enriched in basic and acidic residues. Residues 2194–2214 (ISKTRGGETKREVRVEESTQV) are disordered. A phosphoserine mark is found at S2234 and S2237. T2239 carries the post-translational modification Phosphothreonine. Polar residues predominate over residues 2241–2260 (QQEGEASSQDMTAQVTSPSG). The disordered stretch occupies residues 2241-2261 (QQEGEASSQDMTAQVTSPSGK). A Filamin 20; mediates interaction with XIRP1 repeat occupies 2245-2307 (EASSQDMTAQ…VPGSPFQFTV (63 aa)). 3 Filamin repeats span residues 2310–2402 (LGEG…VVPV), 2404–2497 (SLSD…KIRV), and 2501–2593 (SQAG…KAKV). Residues 2404 to 2725 (SLSDDARRLT…VPGSPFKVNV (322 aa)) form an interaction with INPPL1 region. 6 positions are modified to phosphoserine: S2587, S2618, S2621, S2633, S2715, and S2719. The tract at residues 2594–2630 (TGPRLSGGHSLHETSTVLVETVTKSSSSRGASYSSIP) is hinge 2. The self-association site, tail stretch occupies residues 2594-2726 (TGPRLSGGHS…PGSPFKVNVP (133 aa)). The stretch at 2631–2725 (KFSSDASKVV…VPGSPFKVNV (95 aa)) is one Filamin 24 repeat.

It belongs to the filamin family. Homodimer; the filamin repeat 24 and the second hinge domain are important for dimer formation. Interacts with FLNB, KCND2, INPPL1, ITGB1A, MYOT, MYOZ1 and MYOZ3. Interacts with sarcoglycans SGCD and SGCG. Interacts (via filament repeats 17-18, 20-21 and 24) with USP25 (isoform USP25m only). Interacts with FBLIM1. Interacts with KY. Interacts with IGFN1. Interacts with MICALL2. Interacts with XIRP1; this interaction is mediated by filamin 20 repeat. Interacts with ANK3. Interacts with SYNPO2. In terms of processing, ubiquitinated by FBXL22, leading to proteasomal degradation.

Its subcellular location is the cytoplasm. The protein resides in the membrane. It localises to the cytoskeleton. It is found in the myofibril. The protein localises to the sarcomere. Its subcellular location is the z line. Its function is as follows. Muscle-specific filamin, which plays a central role in sarcomere assembly and organization. Critical for normal myogenesis, it probably functions as a large actin-cross-linking protein with structural functions at the Z lines in muscle cells. May be involved in reorganizing the actin cytoskeleton in response to signaling events. In Rattus norvegicus (Rat), this protein is Filamin-C (Flnc).